A 484-amino-acid polypeptide reads, in one-letter code: Glutamate--tRNA ligase (484 aa).

The short motif at Pro12–Thr22 is the 'HIGH' region element. A 'KMSKS' region motif is present at residues Lys253–Arg257. Residue Lys256 participates in ATP binding.

This sequence belongs to the class-I aminoacyl-tRNA synthetase family. Glutamate--tRNA ligase type 1 subfamily. In terms of assembly, monomer.

It localises to the cytoplasm. It catalyses the reaction tRNA(Glu) + L-glutamate + ATP = L-glutamyl-tRNA(Glu) + AMP + diphosphate. Functionally, catalyzes the attachment of glutamate to tRNA(Glu) in a two-step reaction: glutamate is first activated by ATP to form Glu-AMP and then transferred to the acceptor end of tRNA(Glu). This Rhizobium etli (strain CIAT 652) protein is Glutamate--tRNA ligase.